We begin with the raw amino-acid sequence, 161 residues long: Endoribonuclease YbeY (161 aa).

Residues H127, H131, and H137 each contribute to the Zn(2+) site.

It belongs to the endoribonuclease YbeY family. Zn(2+) is required as a cofactor.

The protein resides in the cytoplasm. Single strand-specific metallo-endoribonuclease involved in late-stage 70S ribosome quality control and in maturation of the 3' terminus of the 16S rRNA. This is Endoribonuclease YbeY from Listeria innocua serovar 6a (strain ATCC BAA-680 / CLIP 11262).